The following is a 477-amino-acid chain: Lactate utilization protein B (477 aa).

4Fe-4S ferredoxin-type domains are found at residues 304–334 (GTQF…GHSY) and 353–382 (YDTY…LHDL). Positions 313, 316, 319, 323, 366, 369, and 373 each coordinate [4Fe-4S] cluster. Residues 443 to 463 (GPKPLQAWTNSRDFPMPDDEN) form a disordered region.

The protein belongs to the LutB/YkgF family.

In terms of biological role, is involved in L-lactate degradation and allows cells to grow with lactate as the sole carbon source. Has probably a role as an electron transporter during oxidation of L-lactate. In Macrococcus caseolyticus (strain JCSC5402) (Macrococcoides caseolyticum), this protein is Lactate utilization protein B.